The following is an 804-amino-acid chain: Protein translocase subunit SecA (804 aa).

ATP contacts are provided by residues Q100, G118–T122, and D508.

The protein belongs to the SecA family. Monomer and homodimer. Part of the essential Sec protein translocation apparatus which comprises SecA, SecYEG and auxiliary proteins SecDF. Other proteins may also be involved.

The protein localises to the cell membrane. Its subcellular location is the cytoplasm. It carries out the reaction ATP + H2O + cellular proteinSide 1 = ADP + phosphate + cellular proteinSide 2.. Its function is as follows. Part of the Sec protein translocase complex. Interacts with the SecYEG preprotein conducting channel. Has a central role in coupling the hydrolysis of ATP to the transfer of proteins into and across the cell membrane, serving as an ATP-driven molecular motor driving the stepwise translocation of polypeptide chains across the membrane. In Leuconostoc citreum (strain KM20), this protein is Protein translocase subunit SecA.